The primary structure comprises 388 residues: MDPTCEESPAEDSNNEEEDLDSTKAAPRIRDTPEDIVLEAPASGLAFHPTRDLLAAGDVDGDVFVFAYSCQEGETKELWSSGHHLKSCRAVVFSEDGQKLVTVSKDKAIHILDVEQGQLERRISKAHSAPINSVLLVDENALVTGDDTGGIRLWDQRKEGPLMDMRQHEEYIADMALDPAKKLLLTASGDGCLGVFNIKRRRFELLSEPQSGDLTSVALMKYGKKVACGSSEGTIYLFNWNGFGATSDRFALRAESIDCIVPVTENLLCTGSTDGIIRAVNILPNRVVGTVGQHAGEPVEALALSHCGHFLASSGHDQRLKFWDMTQLRTVVVDDYRRRKKKGGPLRALSSKAWSTDDFFAGLREDEEDAKAPEEVVRESDDDDDDSD.

Acidic residues predominate over residues 1 to 20; that stretch reads MDPTCEESPAEDSNNEEEDL. Residues 1–33 form a disordered region; the sequence is MDPTCEESPAEDSNNEEEDLDSTKAAPRIRDTP. WD repeat units follow at residues 37 to 76, 83 to 122, 126 to 164, 167 to 206, 209 to 248, 251 to 290, and 293 to 333; these read VLEAPASGLAFHPTRDLLAAGDVDGDVFVFAYSCQEGETK, HHLKSCRAVVFSEDGQKLVTVSKDKAIHILDVEQGQLERR, AHSAPINSVLLVDENALVTGDDTGGIRLWDQRKEGPLMD, QHEEYIADMALDPAKKLLLTASGDGCLGVFNIKRRRFELL, PQSGDLTSVALMKYGKKVACGSSEGTIYLFNWNGFGATSD, ALRAESIDCIVPVTENLLCTGSTDGIIRAVNILPNRVVGT, and QHAG…TVVV. A Phosphoserine modification is found at Ser-355. The segment at 364–388 is disordered; sequence REDEEDAKAPEEVVRESDDDDDDSD. Residues 370 to 379 show a composition bias toward basic and acidic residues; it reads AKAPEEVVRE.

It belongs to the WD repeat WDR55 family.

The protein resides in the nucleus. The protein localises to the nucleolus. It localises to the cytoplasm. Nucleolar protein that acts as a modulator of rRNA synthesis. Plays a central role during organogenesis. This Mus musculus (Mouse) protein is WD repeat-containing protein 55 (Wdr55).